We begin with the raw amino-acid sequence, 346 residues long: MEEIKNITDITQSALAELEAITDLKDLEAWRVRYLGKKSLLTGALRNLASLPIEERKAAGAAANEAKAALEAAFLQKEQISKEKQFASRNEGLDITLPGRPWPIGRIHPLTQVTNEVTTIFSSLGFSVVEGPEIEDDYHNFEALNIPEDHPARENMQTFWIDRPNDNGRLDTLLRTHTSPMQVRYMEKNKPPIRIVVPGKVYRYEATDATHIPMFTQVEGLVVDRGISMAHLKGTLMEFCRRFFGANRKVRFRCDYFPFVEPGVEVAVSCTCGGKKECSVCHGSGWLEILGAGMVHPKVLERVGIDSEQYTGFAFGMGLERLPMLRYGIDDIRLFYSNDTRFLRQF.

Glu-261 provides a ligand contact to Mg(2+).

Belongs to the class-II aminoacyl-tRNA synthetase family. Phe-tRNA synthetase alpha subunit type 1 subfamily. Tetramer of two alpha and two beta subunits. Mg(2+) is required as a cofactor.

The protein resides in the cytoplasm. It catalyses the reaction tRNA(Phe) + L-phenylalanine + ATP = L-phenylalanyl-tRNA(Phe) + AMP + diphosphate + H(+). The polypeptide is Phenylalanine--tRNA ligase alpha subunit (Dehalococcoides mccartyi (strain ATCC BAA-2100 / JCM 16839 / KCTC 5957 / BAV1)).